Here is a 353-residue protein sequence, read N- to C-terminus: MTLLTETLSNIRPVDAGLMAQAQARLDNKTKPIGSLGRLEEFARRTVAISGSLDPSTAKKAIFTFAADHGVVEEGVSAFPKEVTVQMVFNFLKGGAGINVLANHVGADVLVVDMGIDHDFGDTPGLIDRKVARGTRNMAKGPAMTREEAVTALEAGIELACGCKADGVAMAGTGEMGIGNTTAASAIIAAFSGKTVADVTHRGTGINDAALAKKVTIIEQALAVNRPDPKDPIDVLAKVGGLEIAGIAGLVLGCAANRIPVVVDGFISTAGALIACELCPTVKEYIFAAHESVEIGHRFMLERIGAEPILDLHLRLGEGTGAALAMGLIEAGVKILKEMATFAEAGVEKGRDQ.

Catalysis depends on glutamate 318, which acts as the Proton acceptor.

It belongs to the CobT family.

It catalyses the reaction 5,6-dimethylbenzimidazole + nicotinate beta-D-ribonucleotide = alpha-ribazole 5'-phosphate + nicotinate + H(+). It participates in nucleoside biosynthesis; alpha-ribazole biosynthesis; alpha-ribazole from 5,6-dimethylbenzimidazole: step 1/2. Catalyzes the synthesis of alpha-ribazole-5'-phosphate from nicotinate mononucleotide (NAMN) and 5,6-dimethylbenzimidazole (DMB). The chain is Nicotinate-nucleotide--dimethylbenzimidazole phosphoribosyltransferase from Geobacter metallireducens (strain ATCC 53774 / DSM 7210 / GS-15).